Consider the following 498-residue polypeptide: MYSSMASSIRGSTVHLSDRVHSKDELQALNTRLAKYIDKIRNLENENVALQRQLQTAEQTTVTEIHRVSKNYDEELAKLRKQLEDVLRDNARLQMERNSTESENKQLQQRVAQLEKQVRTLEARLRQAEDLVADLQHRLSQSLDVRQQLESDNKDLKNQINSLKGQIQQLKQDYDNERVRTADLENKLQTKEEEHEFEKNALHENLREEKSQRQYLLHDLQRGLQDEFESKLVQQLNELRAEYDEMIKGVRAEVEAKSESRIRDLMAMADQQGDTVTRLQQELEEWRKRSQTTEAELDRLRKENANLNAQLTEIQRQKDDQIRALQQQIRKRQEELQRINDDLGDLTRQYQDLLYVKLALDAELATYNKLLSGEEQRLGMDGSGTVIRRPTGGATGTGSGIYGGTGSGGYSRDIGSTTTTKTTYTSRPTYNYTPIATTPIGGTSTTGRYTPVGGQTLAARQPSPGGSLGRERDIPVLREQKITETFKASGRVGPRTDW.

The coil 1A stretch occupies residues D18–E58. The IF rod domain maps to S22–L378. The segment at Q59–S69 is linker 1. The interval K70 to R213 is coil 1B. Residues Q214–K231 are linker 2. Residues L232–L371 form a coil 2 region. The interval D381–T425 is disordered. The span at G393–G409 shows a compositional bias: gly residues.

It belongs to the intermediate filament family.

The protein resides in the cytoplasm. It is found in the cell cortex. Intermediate filament (IF) protein that forms both short filaments and extensive cytoskeletal networks which most likely are homomeric. Some of the cytotardin arrays display cage-like perinuclear structures, while others are located in the periphery close to the cell membrane. The entire tardigrade body is ensheathed by a grid of belt-like filaments formed by the cytotardin protein, which retain their integrity even in contracted specimens. The belt-like structures encircling each epidermal cell might help to resist the shearing forces that arise during freezing and thawing cycles, whereas the dense meshwork at the basis of each claw and around the stylets might provide the tissue stability necessary for locomotion and feeding. The polypeptide is Cytotardin (Hypsibius exemplaris (Freshwater tardigrade)).